Consider the following 367-residue polypeptide: MSLADQVLAVNDDLPIRTDKPVHSGKVRSVYWLTEEDSQRLIKEKGYDVAPDAPLAIMVISDRISAFDCIWRGEGNLKGVPGKGAALNAISNHWFKLFKDNGLADSHILDIPHPFVWIVQKARPVMIEAICRQYITGSMWRAYANGEREFCGIEMPEGLEKDKKLPELLITPSTKGILKGIPGVPEADDVNITRNNIEDNFAAFNFTQASDIAHYEKLLKEGFNVISQALANVDQTFVDTKFEFGYVNDAQGKEKLIYMDEVGTPDSSRIWDTQEYNKGNIVENSKEGFRQFLLNYFPDADILLNKERMPEREALARDNELPLDSLMSLSRTYLDIAAKITGAEIVLSENPKQEIIDVLRADYGLID.

It belongs to the SAICAR synthetase family.

It carries out the reaction 5-amino-1-(5-phospho-D-ribosyl)imidazole-4-carboxylate + L-aspartate + ATP = (2S)-2-[5-amino-1-(5-phospho-beta-D-ribosyl)imidazole-4-carboxamido]succinate + ADP + phosphate + 2 H(+). It functions in the pathway purine metabolism; IMP biosynthesis via de novo pathway; 5-amino-1-(5-phospho-D-ribosyl)imidazole-4-carboxamide from 5-amino-1-(5-phospho-D-ribosyl)imidazole-4-carboxylate: step 1/2. This is Phosphoribosylaminoimidazole-succinocarboxamide synthase from Vibrio atlanticus (strain LGP32) (Vibrio splendidus (strain Mel32)).